Consider the following 330-residue polypeptide: Tetraacyldisaccharide 4'-kinase (330 aa).

Residue 58 to 65 participates in ATP binding; it reads TVGGSGKT.

It belongs to the LpxK family.

It catalyses the reaction a lipid A disaccharide + ATP = a lipid IVA + ADP + H(+). It functions in the pathway glycolipid biosynthesis; lipid IV(A) biosynthesis; lipid IV(A) from (3R)-3-hydroxytetradecanoyl-[acyl-carrier-protein] and UDP-N-acetyl-alpha-D-glucosamine: step 6/6. Transfers the gamma-phosphate of ATP to the 4'-position of a tetraacyldisaccharide 1-phosphate intermediate (termed DS-1-P) to form tetraacyldisaccharide 1,4'-bis-phosphate (lipid IVA). The protein is Tetraacyldisaccharide 4'-kinase of Shewanella pealeana (strain ATCC 700345 / ANG-SQ1).